The primary structure comprises 128 residues: Large ribosomal subunit protein bL17 (128 aa).

The protein belongs to the bacterial ribosomal protein bL17 family. In terms of assembly, part of the 50S ribosomal subunit. Contacts protein L32.

The sequence is that of Large ribosomal subunit protein bL17 from Baumannia cicadellinicola subsp. Homalodisca coagulata.